The primary structure comprises 257 residues: UPF0246 protein ECA3888 (257 aa).

The protein belongs to the UPF0246 family.

The chain is UPF0246 protein ECA3888 from Pectobacterium atrosepticum (strain SCRI 1043 / ATCC BAA-672) (Erwinia carotovora subsp. atroseptica).